Consider the following 481-residue polypeptide: Argininosuccinate synthase (481 aa).

Residues 17-25 and Ala43 each bind ATP; that span reads AFSGGLDTS. Tyr99 provides a ligand contact to L-citrulline. ATP is bound by residues Gly129 and Thr131. L-aspartate is bound by residues Thr131, Asn135, and Asp136. L-citrulline is bound at residue Asn135. Asp136 contributes to the ATP binding site. Arg139 and Ser192 together coordinate L-citrulline. Asp194 is a binding site for ATP. L-citrulline contacts are provided by Thr201, Glu203, and Glu280.

It belongs to the argininosuccinate synthase family. Type 2 subfamily. In terms of assembly, homotetramer.

It localises to the cytoplasm. The enzyme catalyses L-citrulline + L-aspartate + ATP = 2-(N(omega)-L-arginino)succinate + AMP + diphosphate + H(+). It functions in the pathway amino-acid biosynthesis; L-arginine biosynthesis; L-arginine from L-ornithine and carbamoyl phosphate: step 2/3. In Streptomyces coelicolor (strain ATCC BAA-471 / A3(2) / M145), this protein is Argininosuccinate synthase (argG).